The following is a 236-amino-acid chain: Cutinase (236 aa).

An N-terminal signal peptide occupies residues 1-20 (MSLTLFSFLSLVSILCIVTA). Cys-66 and Cys-143 form a disulfide bridge. The Nucleophile role is filled by Ser-154. The cysteines at positions 202 and 209 are disulfide-linked. Residue Asp-206 is part of the active site. His-218 serves as the catalytic Proton donor/acceptor.

Belongs to the cutinase family. In terms of processing, the 2 disulfide bonds play a critical role in holding the catalytic residues in juxta-position; reduction of the disulfide bridges results in the complete inactivation of the enzyme.

The protein localises to the secreted. It catalyses the reaction cutin + H2O = cutin monomers.. Its function is as follows. Catalyzes the hydrolysis of complex carboxylic polyesters found in the cell wall of plants. Degrades cutin, a macromolecule that forms the structure of the plant cuticle. Allows pathogenic fungi to penetrate through the cuticular barrier into the host plant during the initial stage of fungal infection. The protein is Cutinase (CUT1) of Blumeria hordei (Barley powdery mildew).